A 183-amino-acid polypeptide reads, in one-letter code: Transcription termination/antitermination protein NusG (183 aa).

Residues 131–161 (PGEEVRVTEGPFADFNGTVEEVDYEKGRLKV) enclose the KOW domain.

It belongs to the NusG family.

Functionally, participates in transcription elongation, termination and antitermination. This Pasteurella multocida (strain Pm70) protein is Transcription termination/antitermination protein NusG.